The primary structure comprises 549 residues: Fas-activated serine/threonine kinase (549 aa).

The tract at residues 1 to 30 is disordered; it reads MRRPRGEPGPRAPRPTEGATCAGPGESWSP. One can recognise an RAP domain in the interval 477–535; the sequence is VVLVLRERWHFCRDGRVLLGSRALRERHLGLMGYQLLPLPFEELESQRGLPQLKSYLRQ.

This sequence belongs to the FAST protein kinase family. As to quaternary structure, interacts with TIA1; the interactions leads to TIA1 phosphorylation. Interacts with TIAR. In terms of processing, autophosphorylated on serine/threonine residues. Activated by dephosphorylation. Expressed in heart, brain, placenta, lung, liver, skeletal muscle, kidney and pancreas.

The protein resides in the mitochondrion matrix. The catalysed reaction is L-seryl-[Fas-activated protein] + ATP = O-phospho-L-seryl-[Fas-activated protein] + ADP + H(+). The enzyme catalyses L-threonyl-[Fas-activated protein] + ATP = O-phospho-L-threonyl-[Fas-activated protein] + ADP + H(+). It catalyses the reaction L-seryl-[protein] + ATP = O-phospho-L-seryl-[protein] + ADP + H(+). It carries out the reaction L-threonyl-[protein] + ATP = O-phospho-L-threonyl-[protein] + ADP + H(+). Functionally, phosphorylates the splicing regulator TIA1, thereby promoting the inclusion of FAS exon 6, which leads to an mRNA encoding a pro-apoptotic form of the receptor. In terms of biological role, required for the biogenesis of some mitochondrial-encoded mRNAs, specifically stabilizes ND6 (NADH dehydrogenase complex subunit 6) mRNA, and regulates its levels. This is Fas-activated serine/threonine kinase (FASTK) from Homo sapiens (Human).